The chain runs to 477 residues: FAD-dependent monooxygenase paxM (477 aa).

The helical transmembrane segment at 4–24 (AEFQVIIVGGSIGGLTLAHCL) threads the bilayer. Positions 35, 49, and 108 each coordinate FAD. Arg-195 is an active-site residue. FAD is bound by residues Asp-308 and Ala-321. The chain crosses the membrane as a helical span at residues 446–466 (LMIYLFGLTIVYTSLTMMFDL).

Belongs to the paxM FAD-dependent monooxygenase family. The cofactor is FAD.

The protein localises to the membrane. The protein operates within secondary metabolite biosynthesis. FAD-dependent monooxygenase; part of the gene cluster that mediates the biosynthesis of paxilline, a mycotoxin that acts as an inhibitor of mammalian maxi-K channels. PaxG, the geranylgeranyl diphosphate (GGPP) synthase is proposed to catalyze the first step in paxilline biosynthesis. Condensation of indole-3-glycerol phosphate with GGPP by paxC then forms 3-geranylgeranylindole (3-GGI), followed by epoxidation and cyclization of this intermediate (by paxM and paxB) to form paspaline. Paspaline is subsequently converted to 13-desoxypaxilline by paxP, the latter being then converted to paxilline by paxQ. Finally paxilline can be mono- and di-prenylated by paxD. This is FAD-dependent monooxygenase paxM from Penicillium paxilli.